We begin with the raw amino-acid sequence, 318 residues long: Homoserine kinase (318 aa).

97-107 (PIGSGLGSSAC) provides a ligand contact to ATP.

Belongs to the GHMP kinase family. Homoserine kinase subfamily.

Its subcellular location is the cytoplasm. The catalysed reaction is L-homoserine + ATP = O-phospho-L-homoserine + ADP + H(+). It functions in the pathway amino-acid biosynthesis; L-threonine biosynthesis; L-threonine from L-aspartate: step 4/5. Functionally, catalyzes the ATP-dependent phosphorylation of L-homoserine to L-homoserine phosphate. The chain is Homoserine kinase from Vibrio parahaemolyticus serotype O3:K6 (strain RIMD 2210633).